Reading from the N-terminus, the 327-residue chain is Undecaprenyl-phosphate 4-deoxy-4-formamido-L-arabinose transferase (327 aa).

The next 2 membrane-spanning stretches (helical) occupy residues 236 to 256 (LSIFGSVIALLGFAFGLLLVV) and 270 to 290 (VFMLFAVLFMFIGAQFIGMGL).

The protein belongs to the glycosyltransferase 2 family.

The protein resides in the cell inner membrane. The catalysed reaction is UDP-4-deoxy-4-formamido-beta-L-arabinose + di-trans,octa-cis-undecaprenyl phosphate = 4-deoxy-4-formamido-alpha-L-arabinopyranosyl di-trans,octa-cis-undecaprenyl phosphate + UDP. It participates in glycolipid biosynthesis; 4-amino-4-deoxy-alpha-L-arabinose undecaprenyl phosphate biosynthesis; 4-amino-4-deoxy-alpha-L-arabinose undecaprenyl phosphate from UDP-4-deoxy-4-formamido-beta-L-arabinose and undecaprenyl phosphate: step 1/2. The protein operates within bacterial outer membrane biogenesis; lipopolysaccharide biosynthesis. Functionally, catalyzes the transfer of 4-deoxy-4-formamido-L-arabinose from UDP to undecaprenyl phosphate. The modified arabinose is attached to lipid A and is required for resistance to polymyxin and cationic antimicrobial peptides. This is Undecaprenyl-phosphate 4-deoxy-4-formamido-L-arabinose transferase from Klebsiella pneumoniae (strain 342).